A 311-amino-acid chain; its full sequence is Methionyl-tRNA formyltransferase (311 aa).

Residue 110–113 (SLLP) participates in (6S)-5,6,7,8-tetrahydrofolate binding.

This sequence belongs to the Fmt family.

The catalysed reaction is L-methionyl-tRNA(fMet) + (6R)-10-formyltetrahydrofolate = N-formyl-L-methionyl-tRNA(fMet) + (6S)-5,6,7,8-tetrahydrofolate + H(+). Attaches a formyl group to the free amino group of methionyl-tRNA(fMet). The formyl group appears to play a dual role in the initiator identity of N-formylmethionyl-tRNA by promoting its recognition by IF2 and preventing the misappropriation of this tRNA by the elongation apparatus. The sequence is that of Methionyl-tRNA formyltransferase from Streptococcus pyogenes serotype M28 (strain MGAS6180).